The sequence spans 172 residues: NAD(P)H-quinone oxidoreductase subunit I, chloroplastic (172 aa).

2 4Fe-4S ferredoxin-type domains span residues 55–84 (GRIH…VDWK) and 95–124 (LNYS…MTEE). The [4Fe-4S] cluster site is built by C64, C67, C70, C74, C104, C107, C110, and C114.

It belongs to the complex I 23 kDa subunit family. In terms of assembly, NDH is composed of at least 16 different subunits, 5 of which are encoded in the nucleus. [4Fe-4S] cluster serves as cofactor.

It localises to the plastid. The protein localises to the chloroplast thylakoid membrane. The catalysed reaction is a plastoquinone + NADH + (n+1) H(+)(in) = a plastoquinol + NAD(+) + n H(+)(out). It catalyses the reaction a plastoquinone + NADPH + (n+1) H(+)(in) = a plastoquinol + NADP(+) + n H(+)(out). Functionally, NDH shuttles electrons from NAD(P)H:plastoquinone, via FMN and iron-sulfur (Fe-S) centers, to quinones in the photosynthetic chain and possibly in a chloroplast respiratory chain. The immediate electron acceptor for the enzyme in this species is believed to be plastoquinone. Couples the redox reaction to proton translocation, and thus conserves the redox energy in a proton gradient. The sequence is that of NAD(P)H-quinone oxidoreductase subunit I, chloroplastic from Arabidopsis thaliana (Mouse-ear cress).